Reading from the N-terminus, the 181-residue chain is MAIDLHKQGRVVKRSVVRQTKSTNVYHKLLIKLYKFLVRRTDSKFNQNILKRLSSSRLNKFPLSLSRIVKNLNETNKEQVIVSTSTVTNDERLLTVPKLTVCALKFTETARKRILAAGGKCLTFDQLALKAPTGTNCFLLRAPKSREAYRHWGKAPGQRGSHSAPYVRSEGRKFERAHGLK.

The tract at residues 152 to 181 (WGKAPGQRGSHSAPYVRSEGRKFERAHGLK) is disordered. Residues 169-181 (SEGRKFERAHGLK) are compositionally biased toward basic and acidic residues.

Belongs to the eukaryotic ribosomal protein eL18 family.

Its subcellular location is the cytoplasm. The protein is Large ribosomal subunit protein eL18 (RPL18) of Tetrahymena thermophila.